A 69-amino-acid polypeptide reads, in one-letter code: Probable cold shock protein y4cH (69 aa).

The CSD domain maps to glycine 5 to aspartate 65.

It localises to the cytoplasm. This chain is Probable cold shock protein y4cH, found in Sinorhizobium fredii (strain NBRC 101917 / NGR234).